The primary structure comprises 397 residues: Yellow-related salivary protein LJM111 (397 aa).

The signal sequence occupies residues 1–18; that stretch reads MKLFFFLYTFGLVQTIFG.

This sequence belongs to the major royal jelly protein family. In terms of tissue distribution, salivary gland (at protein level).

It localises to the secreted. Its function is as follows. Probably modulates blood feeding of sand flies on vertebrate species by binding and sequestering different mediators involved in the host response. Binds biogenic amines. Binds adrenaline and noradrenaline with high affinity. Binds serotonin. Binds dopamine and octopamine. Exhibits anti-inflammatory effects in the host: reduces IL17A, TNF-alpha (TNF) and IFN-gamma (IFNG) production by host lymph node cells, suppresses expression of MHC-II and CD86, reduces TNF-alpha production and increases IL10 production, in host bone marrow-derived dendritic cells (BMDCs) stimulated by lipopolysaccharides. Reduces pain in mouse mechanical hypernociception model. This chain is Yellow-related salivary protein LJM111, found in Lutzomyia longipalpis (Sand fly).